We begin with the raw amino-acid sequence, 344 residues long: GTP 3',8-cyclase (344 aa).

One can recognise a Radical SAM core domain in the interval 19-244 (PFGRTISYLR…MDLAESTGGP (226 aa)). Arg28 provides a ligand contact to GTP. Residues Cys35 and Cys39 each contribute to the [4Fe-4S] cluster site. Tyr41 is an S-adenosyl-L-methionine binding site. Cys42 provides a ligand contact to [4Fe-4S] cluster. A GTP-binding site is contributed by Arg77. Gly81 provides a ligand contact to S-adenosyl-L-methionine. Residue Thr111 participates in GTP binding. Residue Ser135 participates in S-adenosyl-L-methionine binding. Lys171 contacts GTP. Met205 provides a ligand contact to S-adenosyl-L-methionine. Residues Cys268 and Cys271 each coordinate [4Fe-4S] cluster. 273–275 (RVR) is a GTP binding site. Cys285 is a [4Fe-4S] cluster binding site.

The protein belongs to the radical SAM superfamily. MoaA family. In terms of assembly, monomer and homodimer. Requires [4Fe-4S] cluster as cofactor.

It catalyses the reaction GTP + AH2 + S-adenosyl-L-methionine = (8S)-3',8-cyclo-7,8-dihydroguanosine 5'-triphosphate + 5'-deoxyadenosine + L-methionine + A + H(+). The protein operates within cofactor biosynthesis; molybdopterin biosynthesis. In terms of biological role, catalyzes the cyclization of GTP to (8S)-3',8-cyclo-7,8-dihydroguanosine 5'-triphosphate. This Bradyrhizobium diazoefficiens (strain JCM 10833 / BCRC 13528 / IAM 13628 / NBRC 14792 / USDA 110) protein is GTP 3',8-cyclase.